Consider the following 119-residue polypeptide: Ribonuclease P protein component (119 aa).

It belongs to the RnpA family. In terms of assembly, consists of a catalytic RNA component (M1 or rnpB) and a protein subunit.

It catalyses the reaction Endonucleolytic cleavage of RNA, removing 5'-extranucleotides from tRNA precursor.. RNaseP catalyzes the removal of the 5'-leader sequence from pre-tRNA to produce the mature 5'-terminus. It can also cleave other RNA substrates such as 4.5S RNA. The protein component plays an auxiliary but essential role in vivo by binding to the 5'-leader sequence and broadening the substrate specificity of the ribozyme. In Syntrophomonas wolfei subsp. wolfei (strain DSM 2245B / Goettingen), this protein is Ribonuclease P protein component.